A 177-amino-acid chain; its full sequence is Large ribosomal subunit protein uL10 (177 aa).

This sequence belongs to the universal ribosomal protein uL10 family. In terms of assembly, part of the ribosomal stalk of the 50S ribosomal subunit. The N-terminus interacts with L11 and the large rRNA to form the base of the stalk. The C-terminus forms an elongated spine to which L12 dimers bind in a sequential fashion forming a multimeric L10(L12)X complex.

In terms of biological role, forms part of the ribosomal stalk, playing a central role in the interaction of the ribosome with GTP-bound translation factors. The polypeptide is Large ribosomal subunit protein uL10 (Mycobacterium leprae (strain Br4923)).